The chain runs to 172 residues: Shikimate kinase (172 aa).

Residue 11 to 16 (GSGKTT) coordinates ATP. Position 15 (T15) interacts with Mg(2+). Residues D33, R57, and G79 each coordinate substrate. R117 contacts ATP. Residue R136 coordinates substrate.

The protein belongs to the shikimate kinase family. In terms of assembly, monomer. The cofactor is Mg(2+).

It localises to the cytoplasm. It catalyses the reaction shikimate + ATP = 3-phosphoshikimate + ADP + H(+). It functions in the pathway metabolic intermediate biosynthesis; chorismate biosynthesis; chorismate from D-erythrose 4-phosphate and phosphoenolpyruvate: step 5/7. Functionally, catalyzes the specific phosphorylation of the 3-hydroxyl group of shikimic acid using ATP as a cosubstrate. This Caldicellulosiruptor bescii (strain ATCC BAA-1888 / DSM 6725 / KCTC 15123 / Z-1320) (Anaerocellum thermophilum) protein is Shikimate kinase.